The sequence spans 112 residues: ATP synthase epsilon chain (112 aa).

The protein belongs to the ATPase epsilon chain family. In terms of assembly, F-type ATPases have 2 components, CF(1) - the catalytic core - and CF(0) - the membrane proton channel. CF(1) has five subunits: alpha(3), beta(3), gamma(1), delta(1), epsilon(1). CF(0) has three main subunits: a, b and c.

The protein resides in the cell inner membrane. In terms of biological role, produces ATP from ADP in the presence of a proton gradient across the membrane. This Rickettsia conorii (strain ATCC VR-613 / Malish 7) protein is ATP synthase epsilon chain (atpC).